The chain runs to 744 residues: MAPSFDHLPDPEEDEYDEEELDISDLRERFEVQLEQGLDTFVVIDGLPEVNEDTKPKLIKFLLRKLDSVGQTKKDSIHMPIGPDGKSFKFAFVEYSSPAEAIAACKALDGVPLDKKHTLRVNKLTDIDRYGREGRIDENYTPPKIEEFTEKEHLRSWLADPAGRGRDQFVMYKDDRVQVFWNNEKDAPESIVDRQHWTESFVQWSPQGTFLTSMHQQGVQLWGGPSWTRQKRFAHPFVNLVDFSPGEKYLTTWSNRPISIGEEGHPALSVDDDGKNYVIWDIETGLPLRSFANLDLPSNSVDAEGNPVKRKIQWPAFKWSSDDKYVARLTQGSSISVYELPRMNLLDKTSIKIDGVMDFDWAPATPHREGVKNYEQLFCYWTPEIGSNPAKVGLMSIPSKEVVRTLNLFSVTDAKLHWQSDASYLCVKVDRHSKSKKSLATSLEIFRVKEKGVPVEVVDSIKDTVINFAWEPKGDRFVIITTAEVVAATAVPPKTSVSFFCPEKVKGNGVGNFKHIRTYDKKNSNAIYWSPKGRFVIVATVHSQQSFDMEFYDMDFEGEKPESDKDLTANLQLMNTADHYGVTDIDWDPTGRFVATSASIWKHTMENGYHLYDFKGEQLREEPVEKFKQWLWRPRPPTLLSKEEQKQIRKNLREYSKVFDQEDADRGASADLAVVEHRRRLLDEWLAWRANIEEDVQAEREDAGLPRDPLEPLKSKMASGDEGQAIEIEEIVEEIVEETEEIIS.

The disordered stretch occupies residues 1–20 (MAPSFDHLPDPEEDEYDEEE). Positions 11 to 20 (PEEDEYDEEE) are enriched in acidic residues. The 87-residue stretch at 40-126 (TFVVIDGLPE…HTLRVNKLTD (87 aa)) folds into the RRM domain. WD repeat units follow at residues 193–232 (DRQHWTESFVQWSPQGTFLTSMHQQGVQLWGGPSWTRQKR), 234–290 (AHPF…PLRS), 307–348 (PVKR…LLDK), and 577–622 (ADHY…LREE). Residues 699 to 714 (EREDAGLPRDPLEPLK) are compositionally biased toward basic and acidic residues. Positions 699-722 (EREDAGLPRDPLEPLKSKMASGDE) are disordered.

Belongs to the eIF-3 subunit B family. As to quaternary structure, component of the eukaryotic translation initiation factor 3 (eIF-3) complex.

The protein resides in the cytoplasm. Its function is as follows. RNA-binding component of the eukaryotic translation initiation factor 3 (eIF-3) complex, which is involved in protein synthesis of a specialized repertoire of mRNAs and, together with other initiation factors, stimulates binding of mRNA and methionyl-tRNAi to the 40S ribosome. The eIF-3 complex specifically targets and initiates translation of a subset of mRNAs involved in cell proliferation. This is Eukaryotic translation initiation factor 3 subunit B (prt1) from Sclerotinia sclerotiorum (strain ATCC 18683 / 1980 / Ss-1) (White mold).